Consider the following 299-residue polypeptide: Taste receptor type 2 member 45 (299 aa).

Position 1 (methionine 1) is a topological domain, extracellular. A helical transmembrane segment spans residues 2-22 (ITFLPIIFSILVVVTFVIGNF). The Cytoplasmic segment spans residues 23 to 55 (ANGFIALVNSTEWVKRQKISFADQIVTALAVSR). A helical transmembrane segment spans residues 56 to 76 (VGLLWVLLLNWYSTVLNPAFC). The Extracellular segment spans residues 77–98 (SVELRTTAYNIWAVTGHFSNWP). A helical transmembrane segment spans residues 99-119 (ATSLSIFYLLKIANFSNLIFL). At 120–126 (RLKRRVK) the chain is on the cytoplasmic side. A helical membrane pass occupies residues 127–147 (SVILVVLLGPLLFLACHLFVV). Over 148-178 (NMNQIVWTKEYEGNMTWKIKLRRAMYLSDTT) the chain is Extracellular. N-linked (GlcNAc...) asparagine glycosylation is present at asparagine 161. Residues 179–199 (VTMLANLVPFTVTLISFLLLV) traverse the membrane as a helical segment. Topologically, residues 200 to 229 (CSLCKHLKKMQLHGKGSQDPSTKVHIKVLQ) are cytoplasmic. Residues 230-250 (TVISFFLLRAIYFVSVIISVW) form a helical membrane-spanning segment. Residues 251 to 259 (SFKNLENKP) lie on the Extracellular side of the membrane. A helical transmembrane segment spans residues 260 to 280 (VFMFCQAIGFSCSSAHPFILI). Over 281–299 (WGNKKLKQTYLSVLWQMRY) the chain is Cytoplasmic.

Belongs to the G-protein coupled receptor T2R family. Expressed in subsets of taste receptor cells of the tongue and exclusively in gustducin-positive cells.

It localises to the membrane. Functionally, receptor that may play a role in the perception of bitterness and is gustducin-linked. May play a role in sensing the chemical composition of the gastrointestinal content. The activity of this receptor may stimulate alpha gustducin, mediate PLC-beta-2 activation and lead to the gating of TRPM5. In Homo sapiens (Human), this protein is Taste receptor type 2 member 45 (TAS2R45).